The primary structure comprises 98 residues: Integration host factor subunit alpha (98 aa).

The protein belongs to the bacterial histone-like protein family. In terms of assembly, heterodimer of an alpha and a beta chain.

This protein is one of the two subunits of integration host factor, a specific DNA-binding protein that functions in genetic recombination as well as in transcriptional and translational control. The polypeptide is Integration host factor subunit alpha (Acinetobacter baumannii (strain AB307-0294)).